The chain runs to 220 residues: NADH-quinone oxidoreductase subunit I (220 aa).

4Fe-4S ferredoxin-type domains follow at residues 71 to 102 (LQRLLDSGSERCIGCGLCEKICTSNCIRIITH) and 112 to 141 (DSYTINLGRCIYCGLCAEVCPELAIVMGNR). 8 residues coordinate [4Fe-4S] cluster: cysteine 82, cysteine 85, cysteine 88, cysteine 92, cysteine 121, cysteine 124, cysteine 127, and cysteine 131. A disordered region spans residues 187–220 (MQATPLDYVQEPSKEESKEESPTSPESHKGDENV). The segment covering 198–220 (PSKEESKEESPTSPESHKGDENV) has biased composition (basic and acidic residues).

It belongs to the complex I 23 kDa subunit family. NDH-1 is composed of 14 different subunits. Subunits NuoA, H, J, K, L, M, N constitute the membrane sector of the complex. It depends on [4Fe-4S] cluster as a cofactor.

It localises to the cell inner membrane. It carries out the reaction a quinone + NADH + 5 H(+)(in) = a quinol + NAD(+) + 4 H(+)(out). NDH-1 shuttles electrons from NADH, via FMN and iron-sulfur (Fe-S) centers, to quinones in the respiratory chain. The immediate electron acceptor for the enzyme in this species is believed to be ubiquinone. Couples the redox reaction to proton translocation (for every two electrons transferred, four hydrogen ions are translocated across the cytoplasmic membrane), and thus conserves the redox energy in a proton gradient. In Helicobacter pylori (strain J99 / ATCC 700824) (Campylobacter pylori J99), this protein is NADH-quinone oxidoreductase subunit I.